A 317-amino-acid polypeptide reads, in one-letter code: tRNA dimethylallyltransferase (317 aa).

14–21 lines the ATP pocket; it reads GPTAVGKT. Substrate is bound at residue 16-21; that stretch reads TAVGKT. Positions 39–42 are interaction with substrate tRNA; the sequence is DSMQ.

It belongs to the IPP transferase family. In terms of assembly, monomer. Requires Mg(2+) as cofactor.

It carries out the reaction adenosine(37) in tRNA + dimethylallyl diphosphate = N(6)-dimethylallyladenosine(37) in tRNA + diphosphate. In terms of biological role, catalyzes the transfer of a dimethylallyl group onto the adenine at position 37 in tRNAs that read codons beginning with uridine, leading to the formation of N6-(dimethylallyl)adenosine (i(6)A). This Bacillus cereus (strain Q1) protein is tRNA dimethylallyltransferase.